Consider the following 175-residue polypeptide: NADH-ubiquinone oxidoreductase chain 6 (175 aa).

Transmembrane regions (helical) follow at residues 1–21, 26–46, 47–67, 87–107, and 152–172; these read MMYM…GFSS, IYGG…VMGL, GGSF…LVVF, VILS…VWMI, and WLVI…IEIT.

Belongs to the complex I subunit 6 family.

Its subcellular location is the mitochondrion membrane. It catalyses the reaction a ubiquinone + NADH + 5 H(+)(in) = a ubiquinol + NAD(+) + 4 H(+)(out). Functionally, core subunit of the mitochondrial membrane respiratory chain NADH dehydrogenase (Complex I) that is believed to belong to the minimal assembly required for catalysis. Complex I functions in the transfer of electrons from NADH to the respiratory chain. The immediate electron acceptor for the enzyme is believed to be ubiquinone. This chain is NADH-ubiquinone oxidoreductase chain 6 (MT-ND6), found in Dasypus novemcinctus (Nine-banded armadillo).